The following is a 557-amino-acid chain: CCR4-NOT transcription complex subunit 6 (557 aa).

4 LRR repeats span residues 52-73, 75-96, 98-120, and 121-143; these read HLTA…IAKL, NLVY…LGNM, SLRE…GKLF, and QLQT…CLEP. The nuclease domain stretch occupies residues 153 to 557; the sequence is LLDNLSGTAK…VNGIHLPGRR (405 aa). Glu-240 serves as a coordination point for Mg(2+). Positions 240, 276, 361, and 366 each coordinate substrate. Mg(2+) is bound at residue Asp-412. Asp-412 (proton donor/acceptor) is an active-site residue. Substrate contacts are provided by Asn-414, Asn-481, and Phe-486.

It belongs to the CCR4/nocturin family. Component of the CCR4-NOT complex; distinct complexes seem to exist that differ in the participation of probably mutually exclusive catalytic subunits; the complex contains two deadenylase subunits, CNOT6 or CNOT6L, and CNOT7 or CNOT8. Interacts with CNOT7 and CNOT8. Interacts with UNR. Interacts with ZFP36L1 (via N-terminus). Interacts with ZNF335. The cofactor is Mg(2+).

The protein localises to the cytoplasm. It is found in the nucleus. It catalyses the reaction Exonucleolytic cleavage of poly(A) to 5'-AMP.. Poly(A) nuclease with 3'-5' RNase activity. Catalytic component of the CCR4-NOT complex which is one of the major cellular mRNA deadenylases and is linked to various cellular processes including bulk mRNA degradation, miRNA-mediated repression, translational repression during translational initiation and general transcription regulation. Additional complex functions may be a consequence of its influence on mRNA expression. Involved in mRNA decay mediated by the major-protein-coding determinant of instability (mCRD) of the FOS gene in the cytoplasm. In the presence of ZNF335, enhances ligand-dependent transcriptional activity of nuclear hormone receptors. Mediates cell proliferation and cell survival and prevents cellular senescence. In Mus musculus (Mouse), this protein is CCR4-NOT transcription complex subunit 6 (Cnot6).